A 141-amino-acid chain; its full sequence is Photosystem II protein PSBR, chloroplastic (141 aa).

Residues M1–V27 constitute a chloroplast transit peptide. A phosphothreonine mark is found at T34 and T37. S43 carries the post-translational modification Phosphoserine. A helical membrane pass occupies residues G114–I134.

It belongs to the psbR family.

The protein localises to the plastid. It is found in the chloroplast thylakoid membrane. Associated with the oxygen-evolving complex of photosystem II (PSII). Is required for the stable binding of LHCSR3 to PSII-LHCII supercomplexes and is essential for efficient energy-dependent quenching and the integrity of the PSII-LHCII-LHCSR3 supercomplex under continuous high light. This is Photosystem II protein PSBR, chloroplastic from Chlamydomonas reinhardtii (Chlamydomonas smithii).